The primary structure comprises 420 residues: Glutamyl-tRNA reductase (420 aa).

Substrate contacts are provided by residues threonine 49–arginine 52, serine 109, glutamate 114–glutamine 116, and glutamine 120. Residue cysteine 50 is the Nucleophile of the active site. Glycine 189–isoleucine 194 contacts NADP(+).

The protein belongs to the glutamyl-tRNA reductase family. As to quaternary structure, homodimer.

The catalysed reaction is (S)-4-amino-5-oxopentanoate + tRNA(Glu) + NADP(+) = L-glutamyl-tRNA(Glu) + NADPH + H(+). It functions in the pathway porphyrin-containing compound metabolism; protoporphyrin-IX biosynthesis; 5-aminolevulinate from L-glutamyl-tRNA(Glu): step 1/2. Functionally, catalyzes the NADPH-dependent reduction of glutamyl-tRNA(Glu) to glutamate 1-semialdehyde (GSA). This chain is Glutamyl-tRNA reductase, found in Photorhabdus laumondii subsp. laumondii (strain DSM 15139 / CIP 105565 / TT01) (Photorhabdus luminescens subsp. laumondii).